A 116-amino-acid chain; its full sequence is Dynein light chain Tctex-type 3 (116 aa).

Tyr4 bears the 3'-nitrotyrosine mark.

Belongs to the dynein light chain Tctex-type family. In terms of assembly, homodimer. The cytoplasmic dynein 1 complex consists of two catalytic heavy chains (HCs) and a number of non-catalytic subunits presented by intermediate chains (ICs), light intermediate chains (LICs) and light chains (LCs); the composition seems to vary in respect to the IC, LIC and LC composition. The heavy chain homodimer serves as a scaffold for the probable homodimeric assembly of the respective non-catalytic subunits. The ICs and LICs bind directly to the HC dimer and the LCs assemble on the IC dimer. DYNLT1 and DYNLT3 compete for association with dynein IC (DYNC1I1 or DYNC1I2). Self-associates. Interacts with DYNC1I1 and DYNC1I2. Interacts with BUB3. Interacts with SATB1 in nucleus to form complex with matrix attachment regions (MARs) of DNA.

The protein localises to the nucleus. Its subcellular location is the cytoplasm. The protein resides in the cytoskeleton. It localises to the chromosome. It is found in the centromere. The protein localises to the kinetochore. Acts as one of several non-catalytic accessory components of the cytoplasmic dynein 1 complex that are thought to be involved in linking dynein to cargos and to adapter proteins that regulate dynein function. Cytoplasmic dynein 1 acts as a motor for the intracellular retrograde motility of vesicles and organelles along microtubules. Probably binds BUB3 as part of transport cargo. Required for the efficient progression through mitosis. The protein is Dynein light chain Tctex-type 3 (DYNLT3) of Ovis aries (Sheep).